Consider the following 324-residue polypeptide: Beta-ketoacyl-[acyl-carrier-protein] synthase III (324 aa).

Catalysis depends on residues Cys112 and His249. The segment at 250 to 254 (QANRR) is ACP-binding. Asn279 is an active-site residue.

Belongs to the thiolase-like superfamily. FabH family. As to quaternary structure, homodimer.

It is found in the cytoplasm. The catalysed reaction is malonyl-[ACP] + acetyl-CoA + H(+) = 3-oxobutanoyl-[ACP] + CO2 + CoA. Its pathway is lipid metabolism; fatty acid biosynthesis. Functionally, catalyzes the condensation reaction of fatty acid synthesis by the addition to an acyl acceptor of two carbons from malonyl-ACP. Catalyzes the first condensation reaction which initiates fatty acid synthesis and may therefore play a role in governing the total rate of fatty acid production. Possesses both acetoacetyl-ACP synthase and acetyl transacylase activities. Its substrate specificity determines the biosynthesis of branched-chain and/or straight-chain of fatty acids. In Streptococcus equi subsp. equi (strain 4047), this protein is Beta-ketoacyl-[acyl-carrier-protein] synthase III.